We begin with the raw amino-acid sequence, 1992 residues long: E3 ubiquitin-protein ligase TRIP12 (1992 aa).

Residues 1–10 (MSNRPNNNPG) show a composition bias toward polar residues. Disordered regions lie at residues 1 to 398 (MSNR…DDSE), 797 to 817 (QRKPNPLANSNTSGYSESKKD), and 938 to 1080 (SLLT…ASKD). Ser-2 is subject to N-acetylserine. At Ser-12 the chain carries Phosphoserine. The segment covering 18–27 (RNTAGAQPQD) has biased composition (polar residues). Residues 48–70 (DPDRANTSERQKTGQVPKKDNSR) show a composition bias toward basic and acidic residues. Residues Ser-77, Ser-85, and Ser-100 each carry the phosphoserine modification. The span at 78–88 (PDYNRTNSPSS) shows a compositional bias: polar residues. Polar residues predominate over residues 119–132 (EQQLKSAQSPSTSK). Low complexity-rich tracts occupy residues 154–166 (SSCVKSGSGSEST) and 175–216 (PTKL…SSTV). The residue at position 181 (Lys-181) is an N6-acetyllysine. Positions 280–290 (PGSSKSETSKP) are enriched in polar residues. Phosphoserine occurs at positions 310 and 312. Over residues 326 to 338 (QKTTGSCASTSRR) the composition is skewed to polar residues. A compositionally biased stretch (basic and acidic residues) spans 346–358 (GAAEARRQEKMAD). 2 stretches are compositionally biased toward polar residues: residues 360-371 (ESNQEAVNSSAA) and 803-812 (LANSNTSGYS). A WWE domain is found at 749 to 836 (MLKKGNAQNT…DPELAKSFIK (88 aa)). Phosphoserine is present on Ser-942. The segment covering 948–973 (TNGSGSMGSTTSVSSGTATAATHAAA) has biased composition (low complexity). Phosphoserine occurs at positions 991 and 997. Basic residues predominate over residues 1001–1014 (KRKRLPKRGPRRPK). At Ser-1016 the chain carries Phosphoserine. A compositionally biased stretch (basic and acidic residues) spans 1017–1026 (PPRDDDKVDN). The segment covering 1029–1040 (KSPTTTQSPKSS) has biased composition (low complexity). Phosphoserine is present on Ser-1030. The segment covering 1041-1062 (FLASLNPKTWGRLSTQSNSNNI) has biased composition (polar residues). Ser-1317, Ser-1322, Ser-1329, and Ser-1376 each carry phosphoserine. A Phosphothreonine modification is found at Thr-1377. 2 disordered regions span residues 1407–1433 (SNKDCVGGKRGRAQTAPTKTSPRNAKK) and 1568–1587 (TNPEINQSDSQDSRVAPRLD). Lys-1425 is modified (N6-acetyllysine). Ser-1427 is modified (phosphoserine). Positions 1496–1570 (EIIPTSEFIN…AMQRLLDTNP (75 aa)) are K-box. In terms of domain architecture, HECT spans 1885 to 1992 (PDHGYTHDSR…REGQQSFHLS (108 aa)). The Glycyl thioester intermediate role is filled by Cys-1959.

The protein belongs to the UPL family. K-HECT subfamily. In terms of assembly, interacts with MYC; leading to disrupt interaction with isoform p19ARF/ARF of CDKN2A. Interacts with TRADD; leading to disrupt interaction with isoform p19ARF/ARF of CDKN2A. Interacts with SMARCC1; leading to disrupt interaction with SMARCE1.

It localises to the nucleus. The protein localises to the nucleoplasm. It carries out the reaction S-ubiquitinyl-[E2 ubiquitin-conjugating enzyme]-L-cysteine + [acceptor protein]-L-lysine = [E2 ubiquitin-conjugating enzyme]-L-cysteine + N(6)-ubiquitinyl-[acceptor protein]-L-lysine.. It participates in protein modification; protein ubiquitination. Functionally, E3 ubiquitin-protein ligase involved in ubiquitin fusion degradation (UFD) pathway and regulation of DNA repair. Part of the ubiquitin fusion degradation (UFD) pathway, a process that mediates ubiquitination of protein at their N-terminus, regardless of the presence of lysine residues in target proteins. Acts as a key regulator of DNA damage response by acting as a suppressor of RNF168, an E3 ubiquitin-protein ligase that promotes accumulation of 'Lys-63'-linked histone H2A and H2AX at DNA damage sites, thereby acting as a guard against excessive spreading of ubiquitinated chromatin at damaged chromosomes. In normal cells, mediates ubiquitination and degradation of isoform p19ARF/ARF of CDKN2A, a lysine-less tumor suppressor required for p53/TP53 activation under oncogenic stress. In cancer cells, however, isoform p19ARF/ARF and TRIP12 are located in different cell compartments, preventing isoform p19ARF/ARF ubiquitination and degradation. Does not mediate ubiquitination of isoform p16-INK4a of CDKN2A. Also catalyzes ubiquitination of NAE1 and SMARCE1, leading to their degradation. Ubiquitination and degradation of target proteins is regulated by interaction with proteins such as MYC, TRADD or SMARCC1, which disrupt the interaction between TRIP12 and target proteins. Mediates ubiquitination of ASXL1: following binding to N(6)-methyladenosine methylated DNA, ASXL1 is ubiquitinated by TRIP12, leading to its degradation and subsequent inactivation of the PR-DUB complex. This chain is E3 ubiquitin-protein ligase TRIP12 (TRIP12), found in Homo sapiens (Human).